Consider the following 509-residue polypeptide: GMP synthase [glutamine-hydrolyzing] (509 aa).

The Glutamine amidotransferase type-1 domain occupies 4 to 193; it reads NVLILDFGSQ…LVKIAQVPQN (190 aa). Cysteine 79 serves as the catalytic Nucleophile. Catalysis depends on residues histidine 167 and glutamate 169. A GMPS ATP-PPase domain is found at 194–384; it reads FTPNAFVSDM…LGIDAELLGR (191 aa). Residue 221-227 coordinates ATP; it reads SGGVDST.

Homodimer.

It catalyses the reaction XMP + L-glutamine + ATP + H2O = GMP + L-glutamate + AMP + diphosphate + 2 H(+). It functions in the pathway purine metabolism; GMP biosynthesis; GMP from XMP (L-Gln route): step 1/1. Its function is as follows. Catalyzes the synthesis of GMP from XMP. The polypeptide is GMP synthase [glutamine-hydrolyzing] (Flavobacterium psychrophilum (strain ATCC 49511 / DSM 21280 / CIP 103535 / JIP02/86)).